The following is a 912-amino-acid chain: Isoleucine--tRNA ligase (912 aa).

The 'HIGH' region motif lies at 57–67; sequence PYANGDIHLGT. E549 is an L-isoleucyl-5'-AMP binding site. Positions 590–594 match the 'KMSKS' region motif; that stretch reads KMSKS. Residue K593 participates in ATP binding. Zn(2+)-binding residues include C880, C883, C900, and C903.

Belongs to the class-I aminoacyl-tRNA synthetase family. IleS type 1 subfamily. As to quaternary structure, monomer. Zn(2+) is required as a cofactor.

It is found in the cytoplasm. The catalysed reaction is tRNA(Ile) + L-isoleucine + ATP = L-isoleucyl-tRNA(Ile) + AMP + diphosphate. Its function is as follows. Catalyzes the attachment of isoleucine to tRNA(Ile). As IleRS can inadvertently accommodate and process structurally similar amino acids such as valine, to avoid such errors it has two additional distinct tRNA(Ile)-dependent editing activities. One activity is designated as 'pretransfer' editing and involves the hydrolysis of activated Val-AMP. The other activity is designated 'posttransfer' editing and involves deacylation of mischarged Val-tRNA(Ile). This is Isoleucine--tRNA ligase from Fervidobacterium pennivorans (strain DSM 9078 / Ven5).